A 546-amino-acid polypeptide reads, in one-letter code: Probable zinc metalloprotease EGY2, chloroplastic (546 aa).

Residues 1–64 (MQLPAMSCSP…QIRNRRFVCQ (64 aa)) constitute a chloroplast transit peptide. The disordered stretch occupies residues 67–143 (TETEPDGDGN…DATPASDAQE (77 aa)). Residues 69 to 86 (TEPDGDGNGDEEKEELGD) are compositionally biased toward acidic residues. Polar residues-rich tracts occupy residues 89–110 (SSPS…TNAD) and 118–130 (NTEP…TVQN). The next 7 helical transmembrane spans lie at 257-277 (AVPE…TLLL), 301-321 (VYGA…HILA), 326-346 (GIKL…FGAI), 364-384 (AAGP…GFIL), 427-447 (PLVL…IPAG), 474-494 (LLGI…LIFF), and 514-534 (YISI…PYPF).

The protein belongs to the peptidase M50B family.

The protein resides in the plastid. Its subcellular location is the chloroplast membrane. Probable membrane-associated metalloprotease that may be involved in chloroplast development. This chain is Probable zinc metalloprotease EGY2, chloroplastic (EGY2), found in Oryza sativa subsp. japonica (Rice).